The chain runs to 337 residues: MIVIDGSEGEGGGAVVRVSTALAAVTSRSVRVYNIRARRSRSGLSHQHLTAVRAVARISNGTLRGDELGSMELEFSPGRVTGGTFNFDVKTAGSTGLVLQAIMVAAAASEGEIDVTVSGGTDVLWAPTCDYLREVTIPVLEMMGYSARIEIIRRGYYPEGGGRVHAIIEPSELRPITLEESEIHAVRGISHSRNLPVHVAERQAESAMKILRGAGLDVDIMVEDASGPVGRGSGITLWAEGNTRLGAVSLGKPGKRAEKVGSEAARELLGFIESGSPLDRYMGDQIIPYMALTGDSRVRTCELTLHAETNIILSEKITGRRFRVEGERGGPATIEVL.

ATP-binding positions include glutamine 100 and 281–285 (YMGDQ). The active-site Tele-AMP-histidine intermediate is the histidine 306.

Belongs to the RNA 3'-terminal cyclase family. Type 1 subfamily.

The protein localises to the cytoplasm. It carries out the reaction a 3'-end 3'-phospho-ribonucleotide-RNA + ATP = a 3'-end 2',3'-cyclophospho-ribonucleotide-RNA + AMP + diphosphate. Functionally, catalyzes the conversion of 3'-phosphate to a 2',3'-cyclic phosphodiester at the end of RNA. The mechanism of action of the enzyme occurs in 3 steps: (A) adenylation of the enzyme by ATP; (B) transfer of adenylate to an RNA-N3'P to produce RNA-N3'PP5'A; (C) and attack of the adjacent 2'-hydroxyl on the 3'-phosphorus in the diester linkage to produce the cyclic end product. The biological role of this enzyme is unknown but it is likely to function in some aspects of cellular RNA processing. The protein is RNA 3'-terminal phosphate cyclase (rtcA) of Methanothermobacter thermautotrophicus (strain ATCC 29096 / DSM 1053 / JCM 10044 / NBRC 100330 / Delta H) (Methanobacterium thermoautotrophicum).